Here is a 218-residue protein sequence, read N- to C-terminus: Small ribosomal subunit protein uS3 (218 aa).

The KH type-2 domain occupies 38 to 106 (IREYINKRLQ…REHINIVEIK (69 aa)).

Belongs to the universal ribosomal protein uS3 family. As to quaternary structure, part of the 30S ribosomal subunit. Forms a tight complex with proteins S10 and S14.

Its function is as follows. Binds the lower part of the 30S subunit head. Binds mRNA in the 70S ribosome, positioning it for translation. This Geobacillus stearothermophilus (Bacillus stearothermophilus) protein is Small ribosomal subunit protein uS3.